The primary structure comprises 364 residues: MKNLRVLVVDDTILYRKIVSDLLREIPGIEVIGVAHNGKIALDKIRLSKPDLITLDIEMPVMNGIELLEHLKDIPDAPGAVMLSTLTSDGSRMTMKALELGAFDFILKPQEKTPAANKAALANSLKQIVKTYRLRNIGFSRTRATTPASRLSPRTTIKREIKTTDRSIKKGKAEIVVIGISTGGPNALTNMLPQIPGNIGVPILIVQHMPPVFTASLATSLNKKCQIEVKEAEDGEAIQPGIAYIAPGGKQMKISASKNGVERLIKITNDPPENSCRPSVDYLFRSVGDYFIGRATAVIMTGMGADGTKGLEVLMAKGAHSIGQDEESCVVYGMPKSVADAGLIDTVCPLNKIAQEIVHTVKLY.

A Response regulatory domain is found at arginine 5–asparagine 123. At aspartate 56 the chain carries 4-aspartylphosphate. In terms of domain architecture, CheB-type methylesterase spans glutamate 174 to tyrosine 364. Active-site residues include serine 181, histidine 208, and aspartate 306.

The protein belongs to the CheB family. Phosphorylated by CheA. Phosphorylation of the N-terminal regulatory domain activates the methylesterase activity.

Its subcellular location is the cytoplasm. It catalyses the reaction [protein]-L-glutamate 5-O-methyl ester + H2O = L-glutamyl-[protein] + methanol + H(+). The enzyme catalyses L-glutaminyl-[protein] + H2O = L-glutamyl-[protein] + NH4(+). Functionally, involved in chemotaxis. Part of a chemotaxis signal transduction system that modulates chemotaxis in response to various stimuli. Catalyzes the demethylation of specific methylglutamate residues introduced into the chemoreceptors (methyl-accepting chemotaxis proteins or MCP) by CheR. Also mediates the irreversible deamidation of specific glutamine residues to glutamic acid. The sequence is that of Protein-glutamate methylesterase/protein-glutamine glutaminase from Desulfotalea psychrophila (strain LSv54 / DSM 12343).